Consider the following 261-residue polypeptide: Enoyl-[acyl-carrier-protein] reductase [NADH] FabI (261 aa).

NAD(+) is bound by residues Gly-15, 21-22 (SI), Gln-42, 66-67 (DV), and Met-94. Position 97 (Ala-97) interacts with substrate. Residues Tyr-147 and Tyr-157 each act as proton acceptor in the active site. Residues Lys-164 and 193–197 (IKTLA) contribute to the NAD(+) site.

This sequence belongs to the short-chain dehydrogenases/reductases (SDR) family. FabI subfamily. Homotetramer.

It catalyses the reaction a 2,3-saturated acyl-[ACP] + NAD(+) = a (2E)-enoyl-[ACP] + NADH + H(+). It functions in the pathway lipid metabolism; fatty acid biosynthesis. Its function is as follows. Catalyzes the reduction of a carbon-carbon double bond in an enoyl moiety that is covalently linked to an acyl carrier protein (ACP). Involved in the elongation cycle of fatty acid which are used in the lipid metabolism. The sequence is that of Enoyl-[acyl-carrier-protein] reductase [NADH] FabI (fabI) from Rickettsia prowazekii (strain Madrid E).